The chain runs to 346 residues: MKRITLYAAGSAIIGAMLLAGPAHAMHISEGILPLGWAALWFAVAAPFLALGIRRVNELSRHDLSFKPLVGLMAAVVFIISCMPIPVPTAGTCSHPCGTGIAAILVGPLVSVVITTVALLIQALFLAHGGLSTLGADVVSMGVAGSFAGWFVFRGMRRLGAGLAVAAFVAGLLADWATYLTTALELSSGVRGSEPFYPLFLKIVAAFVPTQLPLGVLEGAMTAGMVVLLHRKRPDLLAKMGVVDAGGPGAGPRRATVVMLALFCLLASLLVAGPSRASEKWPGVDETVVEKIAAEHGREPRDPLINTDQGDLLLFVFLLAGTVGGFAAGYFWRMLVAERRTYDDHT.

Positions 1–25 are cleaved as a signal peptide; it reads MKRITLYAAGSAIIGAMLLAGPAHA. Helical transmembrane passes span 31 to 51, 68 to 88, 101 to 121, 133 to 153, 159 to 179, 196 to 216, 255 to 275, and 312 to 332; these read GILP…FLAL, PLVG…IPVP, IAAI…ALLI, TLGA…WFVF, LGAG…WATY, FYPL…PLGV, ATVV…AGPS, and LLLF…GYFW.

The protein belongs to the CbiM family. In terms of assembly, forms an energy-coupling factor (ECF) transporter complex composed of an ATP-binding protein (A component, CbiO), a transmembrane protein (T component, CbiQ) and 2 possible substrate-capture proteins (S components, CbiM and CbiN) of unknown stoichimetry.

It is found in the cell inner membrane. It participates in cofactor biosynthesis; adenosylcobalamin biosynthesis. In terms of biological role, part of the energy-coupling factor (ECF) transporter complex CbiMNOQ involved in cobalt import. The chain is Cobalt transport protein CbiM from Geobacter sulfurreducens (strain ATCC 51573 / DSM 12127 / PCA).